Here is a 295-residue protein sequence, read N- to C-terminus: Small ribosomal subunit protein uS3 (295 aa).

The KH type-2 domain maps to 39 to 107 (VREYLKKKLK…PVAVNIEEVR (69 aa)). The interval 213–295 (GTGAKMIEVA…AAAADGAKTE (83 aa)) is disordered. Positions 224 to 245 (EERKPRGPRRDARPGDRPDRGA) are enriched in basic and acidic residues. Composition is skewed to low complexity over residues 246–255 (PRGAPRAPRG) and 283–295 (AAPAAAADGAKTE).

It belongs to the universal ribosomal protein uS3 family. Part of the 30S ribosomal subunit. Forms a tight complex with proteins S10 and S14.

Functionally, binds the lower part of the 30S subunit head. Binds mRNA in the 70S ribosome, positioning it for translation. This chain is Small ribosomal subunit protein uS3, found in Polaromonas naphthalenivorans (strain CJ2).